We begin with the raw amino-acid sequence, 431 residues long: Trigger factor (431 aa).

Residues 163 to 248 (GHFAVIDFTG…LSEIKVKELP (86 aa)) form the PPIase FKBP-type domain.

The protein belongs to the FKBP-type PPIase family. Tig subfamily.

The protein resides in the cytoplasm. It catalyses the reaction [protein]-peptidylproline (omega=180) = [protein]-peptidylproline (omega=0). In terms of biological role, involved in protein export. Acts as a chaperone by maintaining the newly synthesized protein in an open conformation. Functions as a peptidyl-prolyl cis-trans isomerase. The protein is Trigger factor of Geobacter sulfurreducens (strain ATCC 51573 / DSM 12127 / PCA).